The chain runs to 665 residues: Macrolide export ATP-binding/permease protein MacB (665 aa).

The ABC transporter domain occupies 17 to 255 (MQVKGLIREF…AAQPASIIDK (239 aa)). 53-60 (GQSGSGKS) contributes to the ATP binding site. 4 helical membrane-spanning segments follow: residues 287–307 (LLTM…VGLG), 544–564 (IAII…LVSV), 588–608 (FLIE…GLAF), and 630–650 (SIIA…FLPA).

Belongs to the ABC transporter superfamily. Macrolide exporter (TC 3.A.1.122) family. In terms of assembly, homodimer. Part of the tripartite efflux system MacAB-TolC, which is composed of an inner membrane transporter, MacB, a periplasmic membrane fusion protein, MacA, and an outer membrane component, TolC. The complex forms a large protein conduit and can translocate molecules across both the inner and outer membranes. Interacts with MacA.

It localises to the cell inner membrane. Its function is as follows. Part of the tripartite efflux system MacAB-TolC. MacB is a non-canonical ABC transporter that contains transmembrane domains (TMD), which form a pore in the inner membrane, and an ATP-binding domain (NBD), which is responsible for energy generation. Confers resistance against macrolides. The chain is Macrolide export ATP-binding/permease protein MacB from Psychrobacter cryohalolentis (strain ATCC BAA-1226 / DSM 17306 / VKM B-2378 / K5).